A 198-amino-acid chain; its full sequence is tRNA (pseudouridine(54)-N(1))-methyltransferase (198 aa).

L128 lines the S-adenosyl-L-methionine pocket.

Belongs to the methyltransferase superfamily. TrmY family. As to quaternary structure, homodimer.

It is found in the cytoplasm. It carries out the reaction pseudouridine(54) in tRNA + S-adenosyl-L-methionine = N(1)-methylpseudouridine(54) in tRNA + S-adenosyl-L-homocysteine + H(+). Its function is as follows. Specifically catalyzes the N1-methylation of pseudouridine at position 54 (Psi54) in tRNAs. This chain is tRNA (pseudouridine(54)-N(1))-methyltransferase, found in Haloferax volcanii (strain ATCC 29605 / DSM 3757 / JCM 8879 / NBRC 14742 / NCIMB 2012 / VKM B-1768 / DS2) (Halobacterium volcanii).